Here is a 219-residue protein sequence, read N- to C-terminus: tRNA (guanine-N(7)-)-methyltransferase (219 aa).

Glu-43, Asp-68, Glu-101, and Asn-124 together coordinate S-adenosyl-L-methionine. Positions 128 and 160 each coordinate substrate.

The protein belongs to the class I-like SAM-binding methyltransferase superfamily. TrmB family.

The enzyme catalyses guanosine(46) in tRNA + S-adenosyl-L-methionine = N(7)-methylguanosine(46) in tRNA + S-adenosyl-L-homocysteine. Its pathway is tRNA modification; N(7)-methylguanine-tRNA biosynthesis. Its function is as follows. Catalyzes the formation of N(7)-methylguanine at position 46 (m7G46) in tRNA. The polypeptide is tRNA (guanine-N(7)-)-methyltransferase (Clostridium botulinum (strain Alaska E43 / Type E3)).